The sequence spans 311 residues: Methionyl-tRNA formyltransferase (311 aa).

Residue 112-115 (SLLP) coordinates (6S)-5,6,7,8-tetrahydrofolate.

The protein belongs to the Fmt family.

The catalysed reaction is L-methionyl-tRNA(fMet) + (6R)-10-formyltetrahydrofolate = N-formyl-L-methionyl-tRNA(fMet) + (6S)-5,6,7,8-tetrahydrofolate + H(+). Its function is as follows. Attaches a formyl group to the free amino group of methionyl-tRNA(fMet). The formyl group appears to play a dual role in the initiator identity of N-formylmethionyl-tRNA by promoting its recognition by IF2 and preventing the misappropriation of this tRNA by the elongation apparatus. This Rhizobium etli (strain ATCC 51251 / DSM 11541 / JCM 21823 / NBRC 15573 / CFN 42) protein is Methionyl-tRNA formyltransferase.